We begin with the raw amino-acid sequence, 229 residues long: Ribonuclease 3 (229 aa).

Residues 7-132 (LKAFEGRIGH…VIAAVYLDAG (126 aa)) enclose the RNase III domain. Residue glutamate 45 participates in Mg(2+) binding. Aspartate 49 is a catalytic residue. Positions 118 and 121 each coordinate Mg(2+). The active site involves glutamate 121. The DRBM domain maps to 157 to 226 (DAKTALQEWA…ARALLARMEA (70 aa)).

This sequence belongs to the ribonuclease III family. As to quaternary structure, homodimer. Mg(2+) is required as a cofactor.

It localises to the cytoplasm. It carries out the reaction Endonucleolytic cleavage to 5'-phosphomonoester.. Its function is as follows. Digests double-stranded RNA. Involved in the processing of primary rRNA transcript to yield the immediate precursors to the large and small rRNAs (23S and 16S). Processes some mRNAs, and tRNAs when they are encoded in the rRNA operon. Processes pre-crRNA and tracrRNA of type II CRISPR loci if present in the organism. In Cereibacter sphaeroides (strain ATCC 17029 / ATH 2.4.9) (Rhodobacter sphaeroides), this protein is Ribonuclease 3.